Reading from the N-terminus, the 159-residue chain is Protein Smg homolog (159 aa).

It belongs to the Smg family.

The sequence is that of Protein Smg homolog from Vibrio campbellii (strain ATCC BAA-1116).